The following is a 96-amino-acid chain: MRPLLVFVLMVSVSLAFSLEGMPNNGGDSVASITANQARRFKRNPLFSFAQHSLVDLKARACPYYCSSQIRCCLGFKCKDVDGTLKCVSKGDFLGK.

The N-terminal stretch at 1-21 (MRPLLVFVLMVSVSLAFSLEG) is a signal peptide. Positions 22–60 (MPNNGGDSVASITANQARRFKRNPLFSFAQHSLVDLKAR) are excised as a propeptide.

Post-translationally, contains 3 disulfide bonds. In terms of tissue distribution, expressed by the venom duct.

The protein resides in the secreted. This is Teretoxin Tan6.14 from Terebra anilis (Auger snail).